The chain runs to 291 residues: Sulfate transport system permease protein CysW (291 aa).

Over 1 to 22 (MAEVTQLKRYDARPINWGKWFL) the chain is Cytoplasmic. Residues 23-43 (IGIGMLVSAFILLVPMIYIFV) form a helical membrane-spanning segment. Residues 44-69 (QAFSKGLMPVLQNLADPDMLHAIWLT) lie on the Periplasmic side of the membrane. Residues 66–270 (IWLTVMIALI…MAIITLFLKS (205 aa)) form the ABC transmembrane type-1 domain. Residues 70-90 (VMIALIAVPVNLVFGILLAWL) form a helical membrane-spanning segment. Topologically, residues 91-104 (VTRFNFPGRQLLLT) are cytoplasmic. The chain crosses the membrane as a helical span at residues 105-125 (LLDIPFAVSPVVAGLVYLLFY). At 126-141 (GSNGPLGGWLDEHNLQ) the chain is on the periplasmic side. A helical membrane pass occupies residues 142–162 (IMFSWPGMVLVTIFVTCPFVV). At 163-200 (RELVPVMLSQGSQEDEAAILLGASGWQMFRRVTLPNIR) the chain is on the cytoplasmic side. Residues 201-221 (WALLYGVVLTNARAIGEFGAV) traverse the membrane as a helical segment. The Periplasmic segment spans residues 222–247 (SVVSGSIRGETLSLPLQIELLEQDYN). A helical transmembrane segment spans residues 248–268 (TVGSFTAAALLTLMAIITLFL). Topologically, residues 269 to 291 (KSMLQWRLENQEKRAQQEEHHEH) are cytoplasmic.

The protein belongs to the binding-protein-dependent transport system permease family. CysTW subfamily. As to quaternary structure, the complex is composed of two ATP-binding proteins (CysA), two transmembrane proteins (CysT and CysW) and a solute-binding protein (CysP).

It localises to the cell inner membrane. In terms of biological role, part of the ABC transporter complex CysAWTP (TC 3.A.1.6.1) involved in sulfate/thiosulfate import. Probably responsible for the translocation of the substrate across the membrane. The sequence is that of Sulfate transport system permease protein CysW (cysW) from Escherichia coli O6:H1 (strain CFT073 / ATCC 700928 / UPEC).